We begin with the raw amino-acid sequence, 90 residues long: Large ribosomal subunit protein bL27 (90 aa).

Over residues 1–13 the composition is skewed to low complexity; that stretch reads MATKKSGGSSSNG. The tract at residues 1–20 is disordered; sequence MATKKSGGSSSNGRDSRGRR.

This sequence belongs to the bacterial ribosomal protein bL27 family.

This Anaplasma marginale (strain Florida) protein is Large ribosomal subunit protein bL27.